The primary structure comprises 173 residues: MSLLGPKVLLFLAAFIITSDWIPLGVNSQRGDDVTQATPETFTEDPNLVNDPATDETVLAVLADIAPSTDDLASLSEKNTTAECWDEKFTCTRLYSVHRPVKQCIHQLCFTSLRRMYIVNKEICSRLVCKEHEAMKDELCRQMAGLPPRRLRRSNYFRLPPCENVDLQRPNGL.

Residues 1–21 (MSLLGPKVLLFLAAFIITSDW) form the signal peptide. The Cell attachment site motif lies at 30-32 (RGD). Residue T54 is glycosylated (O-linked (GalNAc...) threonine). N-linked (GlcNAc...) asparagine glycosylation occurs at N79.

This sequence belongs to the MFAP family. As to quaternary structure, interacts with TGFB2. Interacts with BMP2. Interacts with FBN1 (via N-terminal domain) and FBN2. Post-translationally, forms intermolecular disulfide bonds either with other MAGP-2 molecules or with other components of the microfibrils. In terms of processing, N- and O-glycosylated. O-glycosylated with core 1 or possibly core 8 glycans. O-glycan heterogeneity at Thr-54: HexHexNAc (major) and HexHexNAc + sulfate (minor).

The protein localises to the secreted. It localises to the extracellular space. It is found in the extracellular matrix. Its function is as follows. May play a role in hematopoiesis. In the cardiovascular system, could regulate growth factors or participate in cell signaling in maintaining large vessel integrity. Component of the elastin-associated microfibrils. The protein is Microfibrillar-associated protein 5 (MFAP5) of Homo sapiens (Human).